The primary structure comprises 272 residues: Large ribosomal subunit protein uL3 (272 aa).

A disordered region spans residues 125–146 (QHIGPKSHGGGGGSQPLRQTGS).

This sequence belongs to the universal ribosomal protein uL3 family. In terms of assembly, part of the 50S ribosomal subunit. Forms a cluster with proteins L14 and L19.

Its function is as follows. One of the primary rRNA binding proteins, it binds directly near the 3'-end of the 23S rRNA, where it nucleates assembly of the 50S subunit. This is Large ribosomal subunit protein uL3 from Metamycoplasma arthritidis (strain 158L3-1) (Mycoplasma arthritidis).